The primary structure comprises 86 residues: Large ribosomal subunit protein bL27 (86 aa).

The tract at residues 1-22 (MATKKAGGSSRNGRDSAGRRLG) is disordered.

This sequence belongs to the bacterial ribosomal protein bL27 family.

The sequence is that of Large ribosomal subunit protein bL27 from Rickettsia bellii (strain RML369-C).